A 435-amino-acid chain; its full sequence is Serine/threonine-protein kinase 40 (435 aa).

The span at 1–10 (MKRRASDRGA) shows a compositional bias: basic and acidic residues. The disordered stretch occupies residues 1–25 (MKRRASDRGAGETSARAKALGSGIS). One can recognise a Protein kinase domain in the interval 35 to 332 (FILGPRLGNS…DVLEALSAII (298 aa)). ATP is bound by residues 41–49 (LGNSPVPSI) and Lys-66. The active-site Proton acceptor is the Asp-197.

The protein belongs to the protein kinase superfamily. CAMK Ser/Thr protein kinase family.

The protein resides in the nucleus. Its subcellular location is the cytoplasm. It carries out the reaction L-seryl-[protein] + ATP = O-phospho-L-seryl-[protein] + ADP + H(+). The enzyme catalyses L-threonyl-[protein] + ATP = O-phospho-L-threonyl-[protein] + ADP + H(+). In terms of biological role, may be a negative regulator of NF-kappa-B and p53-mediated gene transcription. The chain is Serine/threonine-protein kinase 40 (STK40) from Pongo abelii (Sumatran orangutan).